Consider the following 307-residue polypeptide: Porphobilinogen deaminase (307 aa).

C239 is subject to S-(dipyrrolylmethanemethyl)cysteine.

It belongs to the HMBS family. As to quaternary structure, monomer. It depends on dipyrromethane as a cofactor.

The enzyme catalyses 4 porphobilinogen + H2O = hydroxymethylbilane + 4 NH4(+). The protein operates within porphyrin-containing compound metabolism; protoporphyrin-IX biosynthesis; coproporphyrinogen-III from 5-aminolevulinate: step 2/4. Functionally, tetrapolymerization of the monopyrrole PBG into the hydroxymethylbilane pre-uroporphyrinogen in several discrete steps. This Campylobacter jejuni subsp. jejuni serotype O:6 (strain 81116 / NCTC 11828) protein is Porphobilinogen deaminase.